The sequence spans 163 residues: uncharacterized protein (163 aa).

The tract at residues 1–54 (MGKSARLRRSQTSSPENVLLGKDSSDDPYRSDSETESNSSSGTESNMSSDSTTS) is disordered. Positions 23–33 (DSSDDPYRSDS) are enriched in basic and acidic residues. Residues 36 to 52 (ESNSSSGTESNMSSDST) show a composition bias toward low complexity. Positions 69–143 (LRTELAEMEM…VEELESSTRE (75 aa)) form a coiled coil.

This is an uncharacterized protein from Arabidopsis thaliana (Mouse-ear cress).